The chain runs to 241 residues: tRNA pseudouridine synthase B (241 aa).

Catalysis depends on D45, which acts as the Nucleophile.

Belongs to the pseudouridine synthase TruB family. Type 1 subfamily.

The catalysed reaction is uridine(55) in tRNA = pseudouridine(55) in tRNA. Responsible for synthesis of pseudouridine from uracil-55 in the psi GC loop of transfer RNAs. The polypeptide is tRNA pseudouridine synthase B (Chlamydia muridarum (strain MoPn / Nigg)).